The following is a 591-amino-acid chain: MALALTGWQLVWGACVCVLVHGQQAPPGQGSDPGRWRQLIQWENNGQVYSLLNSGAEYVPPGPQGSEANSRVLLAGAPQAPPRRRGGLRRRQAPSLPLPGRVGSDTVRGQARHPFGFGQVPDNWREVAVGDSTGMARARTSVSQQRHGGSASSVSASASAFASTYRQPSSFPQQQFPYPQAPFVSQYETYDPSTRTYDQGYVYYRSASGGLGAAAVASAGVVYPFQPRARYEEYGGGGGEEQPEYPPQGFYPAAPERPYAPQPADGLDRRYSHSLYHEGTAGLEPAYPDPGPDAAQPNGGGGGGTYGGGGGDPRLGWYPPYGNMPPEAYSPPRVVEPQPPFRVLEPPYLPVRSSDAPPPGSERNGAQQGRLSVGSVYRPNQNGRGLPDLVPDPNYVQASTYVQRAHLYSLRCAAEEKCLASTAYAPEATDYDVRVLLRFPQRVKNQGTADFLPNRPRHTWEWHSCHQHYHSMDEFSHYDLLDAATGKKVAEGHKASFCLEDSTCDFGNLKRYACTSHTQGLSPGCYDTYNADIDCQWIDITDVQPGNYILKVHVNPKYIVLESDFTNNVVRCNIHYTGRYVSTTNCKIVQS.

The first 22 residues, 1–22 (MALALTGWQLVWGACVCVLVHG), serve as a signal peptide directing secretion. The propeptide occupies 23–91 (QQAPPGQGSD…PRRRGGLRRR (69 aa)). Disordered stretches follow at residues 77–107 (APQA…SDTV) and 233–373 (EYGG…RLSV). Basic residues predominate over residues 82–92 (PRRRGGLRRRQ). Over residues 298-313 (NGGGGGGTYGGGGGDP) the composition is skewed to gly residues. An interaction with FBLN5 region spans residues 319–386 (PPYGNMPPEA…YRPNQNGRGL (68 aa)). The interval 387-591 (PDLVPDPNYV…STTNCKIVQS (205 aa)) is lysyl-oxidase like. 5 disulfide bridges follow: Cys412–Cys418, Cys465–Cys514, Cys498–Cys504, Cys525–Cys535, and Cys572–Cys586. His466, His468, and His470 together coordinate Cu cation. A cross-link (lysine tyrosylquinone (Lys-Tyr)) is located at residues 494–529 (KASFCLEDSTCDFGNLKRYACTSHTQGLSPGCYDTY). A 2',4',5'-topaquinone modification is found at Tyr529.

The protein belongs to the lysyl oxidase family. Interacts (via propeptide) with EFEMP2. Interacts with FBLN5. The cofactor is Cu cation. Lysine tyrosylquinone residue serves as cofactor. The lysine tyrosylquinone cross-link (LTQ) is generated by condensation of the epsilon-amino group of a lysine with a topaquinone produced by oxidation of tyrosine. Post-translationally, proteolytic processing by a furin-like protease causes removal of N-terminal propeptide resulting in an enzyme largely inactive, but further proteolytic processing by BMP1 results in enzyme activation.

The protein resides in the secreted. It localises to the extracellular space. Its subcellular location is the extracellular matrix. The catalysed reaction is L-lysyl-[protein] + O2 + H2O = (S)-2-amino-6-oxohexanoyl-[protein] + H2O2 + NH4(+). Its function is as follows. Catalyzes the oxidative deamination of lysine and hydroxylysine residues in collagen and elastin, resulting in the formation of covalent cross-linkages, and the stabilization of collagen and elastin fibers. Essential for the elastic fiber homeostasis and for their maintenance at adult age. This Bos taurus (Bovine) protein is Lysyl oxidase homolog 1 (LOXL1).